We begin with the raw amino-acid sequence, 218 residues long: Autophagy-related protein 101 (218 aa).

The protein belongs to the ATG101 family.

It is found in the cytoplasm. The protein localises to the preautophagosomal structure. In terms of biological role, autophagy factor required for autophagosome formation. In Xenopus laevis (African clawed frog), this protein is Autophagy-related protein 101 (atg101).